The following is a 423-amino-acid chain: Adenylosuccinate synthetase (423 aa).

GTP is bound by residues 11–17 and 39–41; these read GDEGKGK and GHT. Catalysis depends on Asp-12, which acts as the Proton acceptor. Positions 12 and 39 each coordinate Mg(2+). IMP-binding positions include 12 to 15, 37 to 40, Thr-127, Arg-141, Gln-223, Thr-238, and Arg-302; these read DEGK and NAGH. His-40 acts as the Proton donor in catalysis. Residue 298–304 coordinates substrate; sequence TTTGRSR. Residues Arg-304, 330–332, and 412–414 contribute to the GTP site; these read KLD and SVG.

The protein belongs to the adenylosuccinate synthetase family. As to quaternary structure, homodimer. Mg(2+) serves as cofactor.

Its subcellular location is the cytoplasm. It carries out the reaction IMP + L-aspartate + GTP = N(6)-(1,2-dicarboxyethyl)-AMP + GDP + phosphate + 2 H(+). It functions in the pathway purine metabolism; AMP biosynthesis via de novo pathway; AMP from IMP: step 1/2. Functionally, plays an important role in the de novo pathway of purine nucleotide biosynthesis. Catalyzes the first committed step in the biosynthesis of AMP from IMP. The sequence is that of Adenylosuccinate synthetase from Methanococcoides burtonii (strain DSM 6242 / NBRC 107633 / OCM 468 / ACE-M).